Consider the following 4043-residue polypeptide: Polyketide synthase-nonribosomal peptide synthetase (4043 aa).

The Ketosynthase family 3 (KS3) domain maps to 8–446; sequence SEPIAIIGTG…GANSHAILES (439 aa). Catalysis depends on for beta-ketoacyl synthase activity residues Cys181, His320, and His366. The segment at 557–877 is acyl transferase; sequence VFTGQGAQWA…SRGNSDVEAF (321 aa). Positions 944–1078 are N-terminal hotdog fold; sequence NELLGRQVLD…CRLRITVGDS (135 aa). A PKS/mFAS DH domain is found at 944–1246; that stretch reads NELLGRQVLD…TQPLSSPTEA (303 aa). Positions 945–1243 are dehydratase (DH) domain; it reads ELLGRQVLDG…GLQTQPLSSP (299 aa). His976 (proton acceptor; for dehydratase activity) is an active-site residue. Positions 1093–1246 are C-terminal hotdog fold; the sequence is LLEVESDRFY…TQPLSSPTEA (154 aa). Asp1154 serves as the catalytic Proton donor; for dehydratase activity. The interval 1400–1585 is methyltransferase (MT) domain; that stretch reads RYTKYLAAMA…GIETAIPHHD (186 aa). A ketoreductase (KR)domain region spans residues 2115 to 2288; the sequence is TYWLVGLTGG…NASAVHIGAI (174 aa). The Carrier 1 domain occupies 2394 to 2475; it reads SSSADIYDII…EMVTQAQELL (82 aa). A peptidyl carrier protein region spans residues 2395-2472; that stretch reads SSADIYDIIS…TVGEMVTQAQ (78 aa). An O-(pantetheine 4'-phosphoryl)serine modification is found at Ser2435. Disordered stretches follow at residues 2476 to 2575 and 2587 to 2630; these read PKEL…DPSR and EKHL…SQII. Composition is skewed to polar residues over residues 2494 to 2512 and 2520 to 2534; these read PKNT…QLQN and ALSQ…NMIK. Residues 2537–2550 show a composition bias toward basic and acidic residues; sequence PPKEAEAKQPRPEV. Low complexity predominate over residues 2617–2627; that stretch reads TSSSSSSTSAS. Positions 2640-3069 are condensation; it reads KSVPMAFGQS…NPALRLNVPP (430 aa). Residues 3102–3502 form an adenylation region; sequence EIVERYPTHV…EGNLILGGRI (401 aa). A Carrier 2 domain is found at 3617 to 3697; the sequence is TDESPSMAKM…GMVSLIDHSE (81 aa). The interval 3622–3694 is thiolation; that stretch reads SMAKMRDVWA…SLTGMVSLID (73 aa). Ser3657 is subject to O-(pantetheine 4'-phosphoryl)serine. The interval 3735–3954 is reductase-like; that stretch reads LTGATGFLGR…DFVSADRVAM (220 aa).

In the C-terminal section; belongs to the NRP synthetase family.

It functions in the pathway mycotoxin biosynthesis. Hybrid PKS-NRPS synthetase; part of the gene cluster that mediates the biosynthesis of the mycotoxins cytochalasins E and K. The hybrid PKS-NRPS synthetase ccsA and the enoyl reductase ccsC are responsible for fusion of phenylalanine with an octaketide backbone and subsequent release of the stable tetramic acid precursor. The polyketide synthase module (PKS) of the PKS-NRPS ccsA is responsible for the synthesis of the octaketide backbone. The downstream nonribosomal peptide synthetase (NRPS) amidates the carboxyl end of the octaketide with a phenylalanine. A reductase-like domain (R) at the C-terminus catalyzes the reductive release of the polyketide-amino acid intermediate. Because ccsA lacks a designated enoylreductase (ER) domain, the required activity is provided the enoyl reductase ccsC. Upon formation of the 11-membered carbocycle-fused perhydroisoindolone intermediate, a number of oxidative steps are required to afford the final cytochalasin E and K, including two hydroxylations at C17 and C18, one alcohol oxidation at C17, one epoxidation at C6 and C7 and two Baeyer-Villiger oxidations. The oxidative modification at C17, C18 and the C6-C7 epoxidation are likely to be catalyzed by the two cytochrome P450 oxygenases ccsD and ccsG. CcsD may be responsible for the epoxidation of the C6-C7 double bond. CcsG may be responsible for the successive oxidative modifications at C17 and C18. The double Baeyer-Villiger oxidations of ketocytochalasin to precytochalasin and cytochalasin Z(16) are among the final steps leading to cytochalasin E and K and are catalyzed by ccsB. The first oxygen insertion step follows that of the classic BVMO mechanism, generating the ester precytochalasin. Release of precytochalasin into an aqueous environment can generate the shunt product iso-precytochalasin through spontaneous isomerization. Alternatively, precytochalasin can undergo further oxidation by ccsB to yield the in-line carbonate-containing cytochalasin Z(16). Cytochalasin Z(16) is a precursor to cytochalasin E and cytochalasin K, whereas iso-precytochalasin is a precursor to cytochalasin Z(17) and rosellichalasin. The hydrolyase ccsE may catalyze hydrolysis of epoxide bond in cytochalasin E to afford cytochalasin K. The function of ccsF has not been assigned but it may play a role in post-PKS-NRPS biosynthetic step, resistance or transport of cytochalasins and related PKS-NRPS products. The polypeptide is Polyketide synthase-nonribosomal peptide synthetase (Aspergillus clavatus (strain ATCC 1007 / CBS 513.65 / DSM 816 / NCTC 3887 / NRRL 1 / QM 1276 / 107)).